The following is a 327-amino-acid chain: Ubiquinone biosynthesis O-methyltransferase, mitochondrial (327 aa).

Positions 79, 142, 165, and 210 each coordinate S-adenosyl-L-methionine. Glutamate 211, glutamate 214, and histidine 215 together coordinate Mg(2+).

The protein belongs to the class I-like SAM-binding methyltransferase superfamily. UbiG/COQ3 family. In terms of assembly, component of a multi-subunit COQ enzyme complex, composed of at least COQ3, COQ4, COQ5, COQ6, COQ7 and COQ9. The cofactor is Mg(2+).

Its subcellular location is the mitochondrion inner membrane. The catalysed reaction is a 3,4-dihydroxy-5-(all-trans-polyprenyl)benzoate + S-adenosyl-L-methionine = a 4-hydroxy-3-methoxy-5-(all-trans-polyprenyl)benzoate + S-adenosyl-L-homocysteine + H(+). The enzyme catalyses a 3-demethylubiquinone + S-adenosyl-L-methionine = a ubiquinone + S-adenosyl-L-homocysteine. It catalyses the reaction a 3-demethylubiquinol + S-adenosyl-L-methionine = a ubiquinol + S-adenosyl-L-homocysteine + H(+). The protein operates within cofactor biosynthesis; ubiquinone biosynthesis. Functionally, O-methyltransferase required for two non-consecutive steps during ubiquinone biosynthesis. Catalyzes the 2 O-methylation of 3,4-dihydroxy-5-(all-trans-polyprenyl)benzoic acid into 4-hydroxy-3-methoxy-5-(all-trans-polyprenyl)benzoic acid. Also catalyzes the last step of ubiquinone biosynthesis by mediating methylation of 3-demethylubiquinone into ubiquinone. Also able to mediate the methylation of 3-demethylubiquinol into ubiquinol. In Candida albicans (Yeast), this protein is Ubiquinone biosynthesis O-methyltransferase, mitochondrial.